A 156-amino-acid polypeptide reads, in one-letter code: Large ribosomal subunit protein uL15 (156 aa).

Positions 1-13 (MKLNEIKDNEGAT) are enriched in basic and acidic residues. The tract at residues 1–41 (MKLNEIKDNEGATKNRKRLGRGIGSGSGKTAGRGVKGQKAR) is disordered. A compositionally biased stretch (gly residues) spans 21–35 (RGIGSGSGKTAGRGV).

The protein belongs to the universal ribosomal protein uL15 family. As to quaternary structure, part of the 50S ribosomal subunit.

Functionally, binds to the 23S rRNA. The protein is Large ribosomal subunit protein uL15 of Sinorhizobium medicae (strain WSM419) (Ensifer medicae).